Reading from the N-terminus, the 403-residue chain is Na(+)-translocating NADH-quinone reductase subunit B (403 aa).

Transmembrane regions (helical) follow at residues 56–76 (MMIT…WNTG), 121–141 (AYFL…EVLF), 163–183 (ILPP…GVVI), 220–240 (WTAV…AGGI), 258–278 (IHGS…AVLI), 287–307 (IVTG…LIGS), 312–332 (LFGM…GMIF), 348–368 (WVFG…NPAF), and 371–391 (GMML…HFVI). Thr230 bears the FMN phosphoryl threonine mark.

The protein belongs to the NqrB/RnfD family. As to quaternary structure, composed of six subunits; NqrA, NqrB, NqrC, NqrD, NqrE and NqrF. Requires FMN as cofactor.

Its subcellular location is the cell inner membrane. The enzyme catalyses a ubiquinone + n Na(+)(in) + NADH + H(+) = a ubiquinol + n Na(+)(out) + NAD(+). In terms of biological role, NQR complex catalyzes the reduction of ubiquinone-1 to ubiquinol by two successive reactions, coupled with the transport of Na(+) ions from the cytoplasm to the periplasm. NqrA to NqrE are probably involved in the second step, the conversion of ubisemiquinone to ubiquinol. The protein is Na(+)-translocating NADH-quinone reductase subunit B of Stutzerimonas stutzeri (strain A1501) (Pseudomonas stutzeri).